A 329-amino-acid chain; its full sequence is Glutamyl-tRNA reductase (329 aa).

Substrate contacts are provided by residues 51–54 (TCLR), Ser99, 104–106 (EDQ), and Gln110. The active-site Nucleophile is the Cys52. Residue 179–184 (GIGELA) participates in NADP(+) binding.

The protein belongs to the glutamyl-tRNA reductase family. Homodimer.

It carries out the reaction (S)-4-amino-5-oxopentanoate + tRNA(Glu) + NADP(+) = L-glutamyl-tRNA(Glu) + NADPH + H(+). The protein operates within porphyrin-containing compound metabolism; protoporphyrin-IX biosynthesis; 5-aminolevulinate from L-glutamyl-tRNA(Glu): step 1/2. In terms of biological role, catalyzes the NADPH-dependent reduction of glutamyl-tRNA(Glu) to glutamate 1-semialdehyde (GSA). This chain is Glutamyl-tRNA reductase, found in Fusobacterium nucleatum subsp. nucleatum (strain ATCC 25586 / DSM 15643 / BCRC 10681 / CIP 101130 / JCM 8532 / KCTC 2640 / LMG 13131 / VPI 4355).